Reading from the N-terminus, the 252-residue chain is ATP synthase subunit a (252 aa).

A run of 7 helical transmembrane segments spans residues 6–26 (LEQF…YFSF), 31–51 (LFML…TLNG), 88–108 (FFPL…IGMI), 117–137 (HFII…IVGF), 144–164 (FFSI…LVLL), 190–212 (LVKI…YLGQ), and 225–245 (LELG…CIYL).

The protein belongs to the ATPase A chain family. F-type ATPases have 2 components, CF(1) - the catalytic core - and CF(0) - the membrane proton channel. CF(1) has five subunits: alpha(3), beta(3), gamma(1), delta(1), epsilon(1). CF(0) has three main subunits: a, b and c.

The protein resides in the mitochondrion inner membrane. In terms of biological role, mitochondrial membrane ATP synthase (F(1)F(0) ATP synthase or Complex V) produces ATP from ADP in the presence of a proton gradient across the membrane which is generated by electron transport complexes of the respiratory chain. F-type ATPases consist of two structural domains, F(1) - containing the extramembraneous catalytic core and F(0) - containing the membrane proton channel, linked together by a central stalk and a peripheral stalk. During catalysis, ATP synthesis in the catalytic domain of F(1) is coupled via a rotary mechanism of the central stalk subunits to proton translocation. Key component of the proton channel; it may play a direct role in the translocation of protons across the membrane. The polypeptide is ATP synthase subunit a (ATP6) (Marchantia polymorpha (Common liverwort)).